Reading from the N-terminus, the 509-residue chain is MSTAKKPLVLVIMDGWGYSTKQEHNAVAAAKTPNLDRLARDYTSTLISGSGLDVGLPDGQMGNSEVGHVNIGAGRIVYQELTRISKEIKDGDFFQNVELAKALDSAVTKGKAVHIMGLMSPGGVHSHEEHIMGMIEMAAKRGAEQIYFHAFLDGRDVPPRSAQSSIEQFDALFARLGKGRFASMIGRYFAMDRDNRWDRVQQAYDLMTQGKGEFTADSASEALAAAYARDENDEFVKATRIGAAAPMQDGDALIFMNFRADRAREITRAFVDSDFTGFARAATPALNFVMLTEYAADIKTACAYPPTALVNTLGEWLAKQGKTQLRISETEKYAHVTFFFNGGEESCFTGEDREIVASPKVATYDLQPEMSSEELTDKLVAAIKSGKYDTIICNYPNGDMVGHTGVFDAAVKACEAVDHCVGRVTEALAEVGGECLITADHGNAEKMLDEETGQAHTAHTNLPVPLIYFGRKAEVLEGGKLSDLAPTMLTLMGLPVPPEMTGKPLMILK.

2 residues coordinate Mn(2+): Asp-14 and Ser-64. The active-site Phosphoserine intermediate is the Ser-64. Substrate is bound by residues His-125, 155 to 156 (RD), Arg-187, Arg-193, 259 to 262 (RADR), and Lys-332. Residues Asp-399, His-403, Asp-440, His-441, and His-459 each coordinate Mn(2+).

It belongs to the BPG-independent phosphoglycerate mutase family. Monomer. The cofactor is Mn(2+).

It carries out the reaction (2R)-2-phosphoglycerate = (2R)-3-phosphoglycerate. It participates in carbohydrate degradation; glycolysis; pyruvate from D-glyceraldehyde 3-phosphate: step 3/5. Functionally, catalyzes the interconversion of 2-phosphoglycerate and 3-phosphoglycerate. The sequence is that of 2,3-bisphosphoglycerate-independent phosphoglycerate mutase from Aeromonas salmonicida (strain A449).